The chain runs to 367 residues: 3-dehydroquinate synthase (367 aa).

Residues 69-74, 103-107, 127-128, K140, K149, and 167-170 contribute to the NAD(+) site; these read DGEAFK, GVVGD, TT, and TLAT. 3 residues coordinate Zn(2+): E182, H245, and H262.

Belongs to the sugar phosphate cyclases superfamily. Dehydroquinate synthase family. Requires Co(2+) as cofactor. It depends on Zn(2+) as a cofactor. The cofactor is NAD(+).

The protein resides in the cytoplasm. It catalyses the reaction 7-phospho-2-dehydro-3-deoxy-D-arabino-heptonate = 3-dehydroquinate + phosphate. It functions in the pathway metabolic intermediate biosynthesis; chorismate biosynthesis; chorismate from D-erythrose 4-phosphate and phosphoenolpyruvate: step 2/7. Its function is as follows. Catalyzes the conversion of 3-deoxy-D-arabino-heptulosonate 7-phosphate (DAHP) to dehydroquinate (DHQ). The chain is 3-dehydroquinate synthase from Azotobacter vinelandii (strain DJ / ATCC BAA-1303).